The chain runs to 901 residues: Clathrin coat assembly protein AP180 (901 aa).

One can recognise an ENTH domain in the interval 14-145 (QYSVTGSAVA…FSYRQMAFDF (132 aa)). 4 disordered regions span residues 285-326 (LEGK…DTSP), 397-424 (PISD…STTT), 497-522 (PETS…PSPA), and 573-606 (AAAP…PESS). A phosphoserine mark is found at Ser-296, Ser-300, and Ser-306. The segment covering 302-324 (LSKSSPATTVTSPNSTPAKTIDT) has biased composition (polar residues). The O-linked (GlcNAc) threonine glycan is linked to Thr-310. Ser-313 carries the post-translational modification Phosphoserine. Thr-317 carries the phosphothreonine modification. Composition is skewed to low complexity over residues 410–424 (TTTT…STTT) and 500–511 (SAPVVTPTASTA). The span at 512-522 (PPVPATAPSPA) shows a compositional bias: pro residues. A phosphoserine mark is found at Ser-594, Ser-600, Ser-621, Ser-627, and Ser-761. Disordered stretches follow at residues 803 to 845 (SAGV…GMTM) and 857 to 901 (MMRP…KDFL). Positions 835-845 (GMPPSGTGMTM) are enriched in low complexity. Arg-859 is subject to Asymmetric dimethylarginine; alternate. Residue Arg-859 is modified to Omega-N-methylarginine; alternate. The span at 870 to 882 (TQLSPSPTPATQS) shows a compositional bias: polar residues. Residues 887–901 (PAKDPLADLNIKDFL) show a composition bias toward basic and acidic residues.

It belongs to the PICALM/SNAP91 family. Binds AP2A2. Interacts with AP2B1; clathrin competes with SNAP91. Thr-310 can be modified by the addition of N-acetylglucosamine which can be further phosphorylated. There is no evidence for direct Thr-310 phosphorylation. Brain. Associated with the synapses.

The protein localises to the cell membrane. Its subcellular location is the membrane. The protein resides in the coated pit. Adaptins are components of the adaptor complexes which link clathrin to receptors in coated vesicles. Clathrin-associated protein complexes are believed to interact with the cytoplasmic tails of membrane proteins, leading to their selection and concentration. Binding of AP180 to clathrin triskelia induces their assembly into 60-70 nm coats. The sequence is that of Clathrin coat assembly protein AP180 (Snap91) from Mus musculus (Mouse).